The following is a 494-amino-acid chain: ATP synthase subunit beta (494 aa).

Residue 177-184 coordinates ATP; the sequence is GGAGVGKT.

Belongs to the ATPase alpha/beta chains family. F-type ATPases have 2 components, CF(1) - the catalytic core - and CF(0) - the membrane proton channel. CF(1) has five subunits: alpha(3), beta(3), gamma(1), delta(1), epsilon(1). CF(0) has three main subunits: a(1), b(2) and c(9-12). The alpha and beta chains form an alternating ring which encloses part of the gamma chain. CF(1) is attached to CF(0) by a central stalk formed by the gamma and epsilon chains, while a peripheral stalk is formed by the delta and b chains.

It is found in the cell membrane. The enzyme catalyses ATP + H2O + 4 H(+)(in) = ADP + phosphate + 5 H(+)(out). In terms of biological role, produces ATP from ADP in the presence of a proton gradient across the membrane. The catalytic sites are hosted primarily by the beta subunits. This chain is ATP synthase subunit beta, found in Bifidobacterium adolescentis (strain ATCC 15703 / DSM 20083 / NCTC 11814 / E194a).